Here is a 658-residue protein sequence, read N- to C-terminus: Translation factor GUF1, mitochondrial (658 aa).

One can recognise a tr-type G domain in the interval 45 to 231 (ENYRNFSIVA…AVIDRIPPPT (187 aa)). GTP-binding positions include 54–61 (AHIDHGKS), 123–127 (DTPGH), and 177–180 (NKID).

It belongs to the TRAFAC class translation factor GTPase superfamily. Classic translation factor GTPase family. LepA subfamily.

Its subcellular location is the mitochondrion inner membrane. It carries out the reaction GTP + H2O = GDP + phosphate + H(+). Promotes mitochondrial protein synthesis. May act as a fidelity factor of the translation reaction, by catalyzing a one-codon backward translocation of tRNAs on improperly translocated ribosomes. Binds to mitochondrial ribosomes in a GTP-dependent manner. The sequence is that of Translation factor GUF1, mitochondrial from Vanderwaltozyma polyspora (strain ATCC 22028 / DSM 70294 / BCRC 21397 / CBS 2163 / NBRC 10782 / NRRL Y-8283 / UCD 57-17) (Kluyveromyces polysporus).